The following is a 424-amino-acid chain: Histidinol dehydrogenase (424 aa).

3 residues coordinate NAD(+): tyrosine 121, glutamine 183, and asparagine 206. Positions 229, 251, and 254 each coordinate substrate. Zn(2+)-binding residues include glutamine 251 and histidine 254. Catalysis depends on proton acceptor residues glutamate 319 and histidine 320. Histidine 320, aspartate 353, glutamate 407, and histidine 412 together coordinate substrate. Residue aspartate 353 coordinates Zn(2+). Residue histidine 412 participates in Zn(2+) binding.

The protein belongs to the histidinol dehydrogenase family. Zn(2+) serves as cofactor.

It catalyses the reaction L-histidinol + 2 NAD(+) + H2O = L-histidine + 2 NADH + 3 H(+). The protein operates within amino-acid biosynthesis; L-histidine biosynthesis; L-histidine from 5-phospho-alpha-D-ribose 1-diphosphate: step 9/9. Catalyzes the sequential NAD-dependent oxidations of L-histidinol to L-histidinaldehyde and then to L-histidine. The sequence is that of Histidinol dehydrogenase from Halalkalibacterium halodurans (strain ATCC BAA-125 / DSM 18197 / FERM 7344 / JCM 9153 / C-125) (Bacillus halodurans).